The primary structure comprises 182 residues: Core-binding factor subunit beta (182 aa).

Position 173 is a phosphoserine (A173).

It belongs to the CBF-beta family. In terms of assembly, heterodimer with RUNX1, RUNX2 and RUNX3. Interacts with COPRS. Found in a complex with PRMT5 and RUNX1. As to quaternary structure, (Microbial infection) Interacts with HIV-1 Vif; forming an active cullin-5-RING E3 ubiquitin-protein ligase complex (ECS complex).

It localises to the nucleus. Its function is as follows. Forms the heterodimeric complex core-binding factor (CBF) with RUNX family proteins (RUNX1, RUNX2, and RUNX3). RUNX members modulate the transcription of their target genes through recognizing the core consensus binding sequence 5'-TGTGGT-3', or very rarely, 5'-TGCGGT-3', within their regulatory regions via their runt domain, while CBFB is a non-DNA-binding regulatory subunit that allosterically enhances the sequence-specific DNA-binding capacity of RUNX. The heterodimers bind to the core site of a number of enhancers and promoters, including murine leukemia virus, polyomavirus enhancer, T-cell receptor enhancers, LCK, IL3 and GM-CSF promoters. CBF complexes repress ZBTB7B transcription factor during cytotoxic (CD8+) T cell development. They bind to RUNX-binding sequence within the ZBTB7B locus acting as transcriptional silencer and allowing for cytotoxic T cell differentiation. In terms of biological role, (Microbial infection) Following infection, hijacked by the HIV-1 Vif protein, leading to the formation a cullin-5-RING E3 ubiquitin-protein ligase complex (ECS complex) that catalyzes ubiquitination and degradation of APOBEC3F and APOBEC3G. The complex can also ubiquitinate APOBEC3H to some extent. Association with HIV-1 Vif protein also inhibits the transcription coactivator activity of CBFB/CBF-beta. The polypeptide is Core-binding factor subunit beta (CBFB) (Homo sapiens (Human)).